Here is a 225-residue protein sequence, read N- to C-terminus: UPF0758 protein NGK_1225 (225 aa).

The region spanning 102–224 (TLSDPDTVAD…VRSFRQLGLM (123 aa)) is the MPN domain. Zn(2+) is bound by residues His-173, His-175, and Asp-186. Residues 173–186 (HNHPGGSPEPSQED) carry the JAMM motif motif.

This sequence belongs to the UPF0758 family.

The sequence is that of UPF0758 protein NGK_1225 from Neisseria gonorrhoeae (strain NCCP11945).